The chain runs to 155 residues: Small ribosomal subunit protein uS9 (155 aa).

This sequence belongs to the universal ribosomal protein uS9 family.

The polypeptide is Small ribosomal subunit protein uS9 (Rhizobium meliloti (strain 1021) (Ensifer meliloti)).